We begin with the raw amino-acid sequence, 499 residues long: Probable cytosol aminopeptidase (499 aa).

Mn(2+) is bound by residues Lys-267 and Asp-272. The active site involves Lys-279. Asp-290, Asp-349, and Glu-351 together coordinate Mn(2+). Residue Arg-353 is part of the active site.

This sequence belongs to the peptidase M17 family. Requires Mn(2+) as cofactor.

Its subcellular location is the cytoplasm. The catalysed reaction is Release of an N-terminal amino acid, Xaa-|-Yaa-, in which Xaa is preferably Leu, but may be other amino acids including Pro although not Arg or Lys, and Yaa may be Pro. Amino acid amides and methyl esters are also readily hydrolyzed, but rates on arylamides are exceedingly low.. The enzyme catalyses Release of an N-terminal amino acid, preferentially leucine, but not glutamic or aspartic acids.. Presumably involved in the processing and regular turnover of intracellular proteins. Catalyzes the removal of unsubstituted N-terminal amino acids from various peptides. The chain is Probable cytosol aminopeptidase from Alkaliphilus oremlandii (strain OhILAs) (Clostridium oremlandii (strain OhILAs)).